The sequence spans 142 residues: MAPKKKVAGLIKLQIVAGQANPAPPVGPALGQHGVNIMEFCKAYNAATENQRGNVIPVEITVYEDRSFTFTLKTPPAAKLLLKAAGVAKGSAEPHKTKVAKVTWDQVREIAETKKTDLNANDVDAAAKIIAGTARSMGITVE.

Belongs to the universal ribosomal protein uL11 family. As to quaternary structure, part of the ribosomal stalk of the 50S ribosomal subunit. Interacts with L10 and the large rRNA to form the base of the stalk. L10 forms an elongated spine to which L12 dimers bind in a sequential fashion forming a multimeric L10(L12)X complex. In terms of processing, one or more lysine residues are methylated.

In terms of biological role, forms part of the ribosomal stalk which helps the ribosome interact with GTP-bound translation factors. This is Large ribosomal subunit protein uL11 from Mycobacterium tuberculosis (strain ATCC 25177 / H37Ra).